The sequence spans 267 residues: 4-hydroxy-tetrahydrodipicolinate reductase (267 aa).

NAD(+) is bound at residue 10–15; it reads GANGRM. Arg37 serves as a coordination point for NADP(+). NAD(+) is bound by residues 98–100 and 122–125; these read GTT and ARNY. Residue His155 is the Proton donor/acceptor of the active site. A (S)-2,3,4,5-tetrahydrodipicolinate-binding site is contributed by His156. Lys159 functions as the Proton donor in the catalytic mechanism. 165–166 serves as a coordination point for (S)-2,3,4,5-tetrahydrodipicolinate; sequence GT.

This sequence belongs to the DapB family.

Its subcellular location is the cytoplasm. The enzyme catalyses (S)-2,3,4,5-tetrahydrodipicolinate + NAD(+) + H2O = (2S,4S)-4-hydroxy-2,3,4,5-tetrahydrodipicolinate + NADH + H(+). The catalysed reaction is (S)-2,3,4,5-tetrahydrodipicolinate + NADP(+) + H2O = (2S,4S)-4-hydroxy-2,3,4,5-tetrahydrodipicolinate + NADPH + H(+). The protein operates within amino-acid biosynthesis; L-lysine biosynthesis via DAP pathway; (S)-tetrahydrodipicolinate from L-aspartate: step 4/4. Functionally, catalyzes the conversion of 4-hydroxy-tetrahydrodipicolinate (HTPA) to tetrahydrodipicolinate. The protein is 4-hydroxy-tetrahydrodipicolinate reductase of Pseudoalteromonas translucida (strain TAC 125).